Reading from the N-terminus, the 635-residue chain is 1-deoxy-D-xylulose-5-phosphate synthase (635 aa).

Thiamine diphosphate-binding positions include histidine 79 and 120–122 (GHS). Aspartate 151 lines the Mg(2+) pocket. Thiamine diphosphate contacts are provided by residues 152-153 (GA), asparagine 182, tyrosine 291, and glutamate 372. Asparagine 182 provides a ligand contact to Mg(2+).

Belongs to the transketolase family. DXPS subfamily. In terms of assembly, homodimer. It depends on Mg(2+) as a cofactor. Thiamine diphosphate serves as cofactor.

It catalyses the reaction D-glyceraldehyde 3-phosphate + pyruvate + H(+) = 1-deoxy-D-xylulose 5-phosphate + CO2. Its pathway is metabolic intermediate biosynthesis; 1-deoxy-D-xylulose 5-phosphate biosynthesis; 1-deoxy-D-xylulose 5-phosphate from D-glyceraldehyde 3-phosphate and pyruvate: step 1/1. Catalyzes the acyloin condensation reaction between C atoms 2 and 3 of pyruvate and glyceraldehyde 3-phosphate to yield 1-deoxy-D-xylulose-5-phosphate (DXP). The chain is 1-deoxy-D-xylulose-5-phosphate synthase from Xylella fastidiosa (strain M23).